Consider the following 495-residue polypeptide: Prenylcysteine oxidase 1-like (495 aa).

Residues 1-22 (MARAAPLLAVLATVLTTAAAGG) form the signal peptide. N-linked (GlcNAc...) asparagine glycans are attached at residues asparagine 185 and asparagine 343.

It belongs to the prenylcysteine oxidase family. FAD is required as a cofactor.

The protein resides in the secreted. Functionally, likely to have oxidoreductase activity. Required in the mevalonate pathway to regulate prenylation and enhances the bactericidal activity of neutrophils. The sequence is that of Prenylcysteine oxidase 1-like (Pcyox1l) from Mus musculus (Mouse).